Reading from the N-terminus, the 626-residue chain is Division abnormally delayed protein (626 aa).

An N-terminal signal peptide occupies residues 1-26 (MAARSVRLAQLLLFTLLCGFVGLSAA). Residues 41-52 (LHSATTHHRRRL) show a composition bias toward basic residues. The segment at 41-65 (LHSATTHHRRRLQRDSRAKDAVGGS) is disordered. N-linked (GlcNAc...) asparagine; atypical glycosylation is present at asparagine 97. Residues asparagine 101, asparagine 150, and asparagine 187 are each glycosylated (N-linked (GlcNAc...) asparagine). Residues 533-607 (NSIQATHDIQ…GKTSGSNPLE (75 aa)) are disordered. O-linked (Xyl...) (heparan sulfate) serine glycans are attached at residues serine 549, serine 569, serine 573, and serine 601. The segment covering 565-575 (GAHGSGDGSGD) has biased composition (gly residues). Glycine 602 is lipidated: GPI-anchor amidated glycine. The propeptide at 603–626 (SNPLEGTATWMLLTLVTMLFSSCS) is removed in mature form.

Belongs to the glypican family. As to quaternary structure, interacts with nord; the interaction promotes dally degradation. Interacts with Magu. As part of the dally/ Magu complex, associates with fwe (isoforms ubi, LoseA and LoseB) and is unable to interact with fwe independently of Magu.

It localises to the cell membrane. Functionally, cell surface proteoglycan that bears heparan sulfate. Functions as a coreceptor for growth factors and morphogens, such as the products of dpp, to regulate signaling and distribution of these ligands. Required for cell division patterning during postembryonic development of the nervous system. Plays a role in dpp/BMP signaling possibly by stabilizing dpp and thereby creating a morphological gradient during wing development. Might have a role in testis development. Functions with magu and fwe in a mechanism of scaling, which utilises apoptosis to ensure that the dpp patterning gradient remains proportional to the size of the growing wing. In this mechanism, fwe represses dally and Magu-dependent activity in expanding the gradient, and dally/Magu inhibits fwe-dependent apoptosis to keep cell death rate low. When the levels of these different proteins are optimally regulated the gradient correctly scales with organ growth but when this fails, fwe-mediated apoptosis is activated to trim the developing tissue to match the correct size of the gradient. In Drosophila melanogaster (Fruit fly), this protein is Division abnormally delayed protein (dally).